A 94-amino-acid chain; its full sequence is Putative septation protein SpoVG (94 aa).

It belongs to the SpoVG family.

In terms of biological role, could be involved in septation. This chain is Putative septation protein SpoVG, found in Acetivibrio thermocellus (strain ATCC 27405 / DSM 1237 / JCM 9322 / NBRC 103400 / NCIMB 10682 / NRRL B-4536 / VPI 7372) (Clostridium thermocellum).